Here is a 154-residue protein sequence, read N- to C-terminus: Probable transcription factor At4g00232 (154 aa).

The disordered stretch occupies residues 1 to 44 (MDKANTNRSKVCGGSGEAKLTGKKRKNVSAKQSKKDAKKENSQM).

The protein belongs to the GeBP family.

In Arabidopsis thaliana (Mouse-ear cress), this protein is Probable transcription factor At4g00232.